The following is a 158-amino-acid chain: NAD(P)H-quinone oxidoreductase subunit J, chloroplastic (158 aa).

The protein belongs to the complex I 30 kDa subunit family. NDH is composed of at least 16 different subunits, 5 of which are encoded in the nucleus.

Its subcellular location is the plastid. The protein localises to the chloroplast thylakoid membrane. The catalysed reaction is a plastoquinone + NADH + (n+1) H(+)(in) = a plastoquinol + NAD(+) + n H(+)(out). The enzyme catalyses a plastoquinone + NADPH + (n+1) H(+)(in) = a plastoquinol + NADP(+) + n H(+)(out). Functionally, NDH shuttles electrons from NAD(P)H:plastoquinone, via FMN and iron-sulfur (Fe-S) centers, to quinones in the photosynthetic chain and possibly in a chloroplast respiratory chain. The immediate electron acceptor for the enzyme in this species is believed to be plastoquinone. Couples the redox reaction to proton translocation, and thus conserves the redox energy in a proton gradient. The sequence is that of NAD(P)H-quinone oxidoreductase subunit J, chloroplastic from Nandina domestica (Heavenly bamboo).